We begin with the raw amino-acid sequence, 615 residues long: UvrABC system protein C (615 aa).

The region spanning 14-91 is the GIY-YIG domain; the sequence is TSPGCYIHKD…IKENKPKYNI (78 aa). The region spanning 196 to 231 is the UVR domain; that stretch reads NKIIDELKGKMAAAAQTMEFERAAEYRDLIQAIGTL.

It belongs to the UvrC family. Interacts with UvrB in an incision complex.

It localises to the cytoplasm. The UvrABC repair system catalyzes the recognition and processing of DNA lesions. UvrC both incises the 5' and 3' sides of the lesion. The N-terminal half is responsible for the 3' incision and the C-terminal half is responsible for the 5' incision. The sequence is that of UvrABC system protein C from Streptococcus pneumoniae (strain JJA).